The following is a 332-amino-acid chain: Phosphate acyltransferase (332 aa).

This sequence belongs to the PlsX family. Homodimer. Probably interacts with PlsY.

The protein localises to the cytoplasm. The enzyme catalyses a fatty acyl-[ACP] + phosphate = an acyl phosphate + holo-[ACP]. It functions in the pathway lipid metabolism; phospholipid metabolism. Its function is as follows. Catalyzes the reversible formation of acyl-phosphate (acyl-PO(4)) from acyl-[acyl-carrier-protein] (acyl-ACP). This enzyme utilizes acyl-ACP as fatty acyl donor, but not acyl-CoA. The sequence is that of Phosphate acyltransferase from Fusobacterium nucleatum subsp. nucleatum (strain ATCC 25586 / DSM 15643 / BCRC 10681 / CIP 101130 / JCM 8532 / KCTC 2640 / LMG 13131 / VPI 4355).